A 378-amino-acid chain; its full sequence is MQSAIKPVEYDRPLAAGAACGVGEAWAKVPAPLAAGEREALKARIKALLEREKAVLVAHYYVDAELQELADETGGCVADSLEMARFGRDHGAQTLVVAGVRFMGETAKILSPGKRVLMPDLDATCSLDLGCPVDEFSRFCDAHPDRTVVVYANTSAAVKARADWMVTSSIGLEIVANLHARGEKIIWAPDRHLGGYIQKKTGADMLMWQGSCLVHDEFKGIELDLLRNEYPDAKILVHPESPEGVVALADVVGSTTQLIDAAVKLDAQRFIVATDLGILHKMRLAAPGKTFIEAPTAGNSATCKSCAHCPWMAMNVLSNLADVLERGHNEIFVDAAIAERARVPIDRMLDFAARHKQRVQASGDLLRDQQLFANVGAA.

Residues His59 and Ser80 each coordinate iminosuccinate. Cys125 contributes to the [4Fe-4S] cluster binding site. Iminosuccinate-binding positions include 151–153 and Ser168; that span reads YAN. Residue Cys212 coordinates [4Fe-4S] cluster. Residues 238–240 and Thr255 contribute to the iminosuccinate site; that span reads HPE. Position 309 (Cys309) interacts with [4Fe-4S] cluster.

This sequence belongs to the quinolinate synthase family. Type 1 subfamily. The cofactor is [4Fe-4S] cluster.

The protein resides in the cytoplasm. The enzyme catalyses iminosuccinate + dihydroxyacetone phosphate = quinolinate + phosphate + 2 H2O + H(+). It functions in the pathway cofactor biosynthesis; NAD(+) biosynthesis; quinolinate from iminoaspartate: step 1/1. Functionally, catalyzes the condensation of iminoaspartate with dihydroxyacetone phosphate to form quinolinate. This is Quinolinate synthase from Burkholderia thailandensis (strain ATCC 700388 / DSM 13276 / CCUG 48851 / CIP 106301 / E264).